Here is a 366-residue protein sequence, read N- to C-terminus: Peptide chain release factor 2 (366 aa).

Position 251 is an N5-methylglutamine (glutamine 251).

It belongs to the prokaryotic/mitochondrial release factor family. Post-translationally, methylated by PrmC. Methylation increases the termination efficiency of RF2.

The protein localises to the cytoplasm. In terms of biological role, peptide chain release factor 2 directs the termination of translation in response to the peptide chain termination codons UGA and UAA. This is Peptide chain release factor 2 (prfB) from Listeria monocytogenes serotype 4b (strain F2365).